We begin with the raw amino-acid sequence, 676 residues long: Palmitoyl-CoA ligase FUM16 (676 aa).

Residue 245–256 (IMYTSGSTGLPN) participates in AMP binding. Positions 552–655 (KLESIYRTSQ…SGLVTPTMKL (104 aa)) are AMP-binding.

This sequence belongs to the ATP-dependent AMP-binding enzyme family.

Its subcellular location is the endoplasmic reticulum. It participates in mycotoxin biosynthesis. Palmitoyl-CoA ligase; part of the gene cluster that mediates the biosynthesis of fumonisins B1 (FB1), B2 (FB2), B3 (FB3), and B4 (FB4), which are carcinogenic mycotoxins. Plays a role in the synthesis of ceramide and is involved in self-protection from fumonisin B1 toxicity. The biosynthesis starts with the FUM1-catalyzed carbon chain assembly from one molecule of acetyl-CoA, eight molecules of malonyl-CoA, and two molecules of methionine (in S-adenosyl form). The C18 polyketide chain is released from the enzyme by a nucleophilic attack of a carbanion, which is derived from R-carbon of alanine by decarboxylation, on the carbonyl carbon of polyketide acyl chain. This step is catalyzed by the pyridoxal 5'-phosphate-dependent aminoacyl transferase FUM8. The resultant 3-keto intermediate is then stereospecifically reduced to a 3-hydroxyl product by reductase FUM13. Subsequent oxidations at C-10 by the cytochrome P450 monooxygenase FUM2, C-14 and C-15 by FUM6, FUM12 or FUM15, tricarballylic esterification of the hydroxyl groups on C-14 and C-15 by acyltransferase FUM14, and C-5 hydroxylation by 2-keto-glutarate-dependent dioxygenase FUM3 furnish the biosynthesis of fumonisins. The tricarballylic moieties are most likely derived from the citric acid cycle, and their addition to the carbon backbone may involve FUM7, FUM10, FUM11 and FUM14. The protein is Palmitoyl-CoA ligase FUM16 of Gibberella moniliformis (strain M3125 / FGSC 7600) (Maize ear and stalk rot fungus).